The primary structure comprises 957 residues: Glycine dehydrogenase (decarboxylating) (957 aa).

K708 is modified (N6-(pyridoxal phosphate)lysine).

It belongs to the GcvP family. As to quaternary structure, the glycine cleavage system is composed of four proteins: P, T, L and H. Requires pyridoxal 5'-phosphate as cofactor.

The enzyme catalyses N(6)-[(R)-lipoyl]-L-lysyl-[glycine-cleavage complex H protein] + glycine + H(+) = N(6)-[(R)-S(8)-aminomethyldihydrolipoyl]-L-lysyl-[glycine-cleavage complex H protein] + CO2. Functionally, the glycine cleavage system catalyzes the degradation of glycine. The P protein binds the alpha-amino group of glycine through its pyridoxal phosphate cofactor; CO(2) is released and the remaining methylamine moiety is then transferred to the lipoamide cofactor of the H protein. In Escherichia coli O17:K52:H18 (strain UMN026 / ExPEC), this protein is Glycine dehydrogenase (decarboxylating).